The sequence spans 372 residues: Alanine dehydrogenase 1 (372 aa).

His-94 is an active-site residue. Residue 170-200 (TYVIFGGGVAATNAANVALGLNAKVIIIELN) coordinates NAD(+).

This sequence belongs to the AlaDH/PNT family.

The enzyme catalyses L-alanine + NAD(+) + H2O = pyruvate + NH4(+) + NADH + H(+). It participates in amino-acid degradation; L-alanine degradation via dehydrogenase pathway; NH(3) and pyruvate from L-alanine: step 1/1. Its function is as follows. May play a role in cell wall synthesis as L-alanine is an important constituent of the peptidoglycan layer. This Staphylococcus aureus (strain NCTC 8325 / PS 47) protein is Alanine dehydrogenase 1 (ald1).